A 987-amino-acid polypeptide reads, in one-letter code: Ephrin type-B receptor 4a (987 aa).

An N-terminal signal peptide occupies residues 1–24; the sequence is MELFSRNVAAFWIILLEFLLGSVA. At 25–548 the chain is on the extracellular side; the sequence is EEEVLMNTKT…DSSSPLLVTG (524 aa). Residues 26 to 205 enclose the Eph LBD domain; sequence EEVLMNTKTE…FFKKCPALTR (180 aa). Disulfide bonds link Cys70-Cys187 and Cys104-Cys114. The disordered stretch occupies residues 319–340; the sequence is DSADTPCTRPPSSPRSPVPQVN. The segment covering 326–335 has biased composition (pro residues); the sequence is TRPPSSPRSP. 2 consecutive Fibronectin type-III domains span residues 328–438 and 442–536; these read PPSS…TSPN and LVSG…TLPD. Residues 549–569 form a helical membrane-spanning segment; it reads ILIAMGMLLLIIVIGAAIYCI. Over 570 to 987 the chain is Cytoplasmic; it reads RKQNNYKDPE…QNKAPGNVLY (418 aa). The 264-residue stretch at 621–884 folds into the Protein kinase domain; that stretch reads VKIEEVIGAG…NIVSALDKLI (264 aa). ATP contacts are provided by residues 627–635 and Lys653; that span reads IGAGEFGEV. Asp746 serves as the catalytic Proton acceptor. Residues 914–978 form the SAM domain; it reads SSCGTVGDWL…LSSIEALGIQ (65 aa).

This sequence belongs to the protein kinase superfamily. Tyr protein kinase family. Ephrin receptor subfamily.

The protein resides in the cell membrane. It catalyses the reaction L-tyrosyl-[protein] + ATP = O-phospho-L-tyrosyl-[protein] + ADP + H(+). Receptor tyrosine kinase which binds promiscuously transmembrane ephrin-B family ligands residing on adjacent cells, leading to contact-dependent bidirectional signaling into neighboring cells. The signaling pathway downstream of the receptor is referred to as forward signaling while the signaling pathway downstream of the ephrin ligand is referred to as reverse signaling. Together with its cognate ligand/functional ligand EFNB2 is involved in the regulation of cell adhesion and cell migration, and plays a central role in heart morphogenesis, angiogenesis and blood vessel remodeling and permeability. EPHB4-mediated forward signaling controls cellular repulsion and segregation from EFNB2-expressing cells. Involved in somitogenesis. In Danio rerio (Zebrafish), this protein is Ephrin type-B receptor 4a.